A 229-amino-acid polypeptide reads, in one-letter code: uncharacterized protein (229 aa).

The interval 61 to 229 (MQAEDKVSKP…TESEDKPKRG (169 aa)) is disordered. Over residues 109–128 (QQEKQQPEKAVVEQQEKQQP) the composition is skewed to basic and acidic residues. The segment covering 166 to 194 (QPEQPERQQQAQPERQQQAQPERQQQAQP) has biased composition (low complexity). Acidic residues predominate over residues 195–204 (EEAEDAEQEP). Residues 218-229 (TQTESEDKPKRG) are compositionally biased toward basic and acidic residues.

This is an uncharacterized protein from Frog virus 3 (isolate Goorha) (FV-3).